The chain runs to 735 residues: Photosystem I P700 chlorophyll a apoprotein A2 (735 aa).

8 helical membrane passes run 47-70 (IFAS…FHVA), 136-159 (LYIG…LHLQ), 176-200 (LNHH…HVAI), 274-292 (MAHH…GHMY), 331-354 (LHFQ…QHMY), 370-396 (ASLY…IFFI), 418-440 (AIIS…LYVH), and 518-536 (FLVH…LILV). Positions 560 and 569 each coordinate [4Fe-4S] cluster. The next 2 membrane-spanning stretches (helical) occupy residues 576–597 (AFYL…YFHW) and 644–666 (LSVW…MFLI). Chlorophyll a contacts are provided by histidine 655, methionine 663, and tyrosine 671. Tryptophan 672 serves as a coordination point for phylloquinone. The helical transmembrane segment at 708–728 (VVGLAHFSAGYILTYAAFLIA) threads the bilayer.

This sequence belongs to the PsaA/PsaB family. The PsaA/B heterodimer binds the P700 chlorophyll special pair and subsequent electron acceptors. PSI consists of a core antenna complex that captures photons, and an electron transfer chain that converts photonic excitation into a charge separation. The eukaryotic PSI reaction center is composed of at least 11 subunits. P700 is a chlorophyll a/chlorophyll a' dimer, A0 is one or more chlorophyll a, A1 is one or both phylloquinones and FX is a shared 4Fe-4S iron-sulfur center. is required as a cofactor.

It localises to the plastid. It is found in the chloroplast thylakoid membrane. The catalysed reaction is reduced [plastocyanin] + hnu + oxidized [2Fe-2S]-[ferredoxin] = oxidized [plastocyanin] + reduced [2Fe-2S]-[ferredoxin]. PsaA and PsaB bind P700, the primary electron donor of photosystem I (PSI), as well as the electron acceptors A0, A1 and FX. PSI is a plastocyanin/cytochrome c6-ferredoxin oxidoreductase, converting photonic excitation into a charge separation, which transfers an electron from the donor P700 chlorophyll pair to the spectroscopically characterized acceptors A0, A1, FX, FA and FB in turn. Oxidized P700 is reduced on the lumenal side of the thylakoid membrane by plastocyanin or cytochrome c6. The sequence is that of Photosystem I P700 chlorophyll a apoprotein A2 from Tupiella akineta (Green alga).